A 637-amino-acid chain; its full sequence is Delta(14)-sterol reductase LBR (637 aa).

The 62-residue stretch at 1–62 folds into the Tudor domain; the sequence is MPNRKYADGE…DIRLQSSFKQ (62 aa). Topologically, residues 1 to 205 are nuclear; the sequence is MPNRKYADGE…KTKELEFGGR (205 aa). Residues 57-73 are compositionally biased toward low complexity; that stretch reads QSSFKQRKSQSSSSSPS. The tract at residues 57–151 is disordered; it reads QSSFKQRKSQ…SKLLEQQKLK (95 aa). The segment covering 74 to 97 has biased composition (basic residues); that stretch reads RRSRSRSRSRSPGRPAKGRRRSSS. S95 and S96 each carry phosphoserine; by PKA. Composition is skewed to basic and acidic residues over residues 98–110 and 124–151; these read HSRE…KKII and NTRR…QKLK. 8 helical membrane passes run 206-226, 250-270, 288-309, 317-338, 378-399, 403-425, 466-486, and 554-574; these read FGTF…VLMC, VFGV…LPIG, INGF…YFQF, HFVQ…YLYI, YFCE…MLLA, IHNQ…LYVV, FYLV…ITIL, and PCGF…CLLV.

The protein belongs to the ERG4/ERG24 family. Interacts with DNA. Interaction with DNA is sequence independent with higher affinity for supercoiled and relaxed circular DNA than linear DNA.

The protein localises to the nucleus inner membrane. The protein resides in the nucleus. Its subcellular location is the cytoplasm. It localises to the endoplasmic reticulum membrane. It carries out the reaction 5alpha-cholest-8,14-dien-3beta-ol + NADPH + H(+) = 5alpha-cholest-8-en-3beta-ol + NADP(+). It catalyses the reaction 4,4-dimethyl-5alpha-cholesta-8,24-dien-3beta-ol + NADP(+) = 4,4-dimethyl-5alpha-cholesta-8,14,24-trien-3beta-ol + NADPH + H(+). The catalysed reaction is 4,4-dimethyl-8,14-cholestadien-3beta-ol + NADPH + H(+) = 4,4-dimethyl-5alpha-cholest-8-en-3beta-ol + NADP(+). Its pathway is steroid biosynthesis; cholesterol biosynthesis. Functionally, catalyzes the reduction of the C14-unsaturated bond of lanosterol, as part of the metabolic pathway leading to cholesterol biosynthesis. Anchors the lamina and the heterochromatin to the inner nuclear membrane. This is Delta(14)-sterol reductase LBR (LBR) from Gallus gallus (Chicken).